Here is a 1363-residue protein sequence, read N- to C-terminus: Collagen alpha-2(I) chain (1363 aa).

The first 22 residues, 1–22 (MLSFVDTRILLLLAVTSYLATS), serve as a signal peptide directing secretion. Gln23 carries the pyrrolidone carboxylic acid modification. Positions 23-77 (QHLFQASAGRKGPRGDKGPQGERGPPGPPGRDGEDGPPGPPGPPGPPGLGGNFAA) are cleaved as a propeptide — N-terminal propeptide. Positions 28–1110 (ASAGRKGPRG…GPNGGGYEVG (1083 aa)) are disordered. Pro residues predominate over residues 59–69 (PPGPPGPPGPP). Pyrrolidone carboxylic acid is present on Gln78. Lys83 carries the post-translational modification Allysine. Over residues 88–97 (GPGPMGLMGP) the composition is skewed to low complexity. Positions 98-110 (RGPPGASGPPGPP) are enriched in pro residues. Positions 112-128 (FQGVPGEPGEPGQTGPQ) are enriched in low complexity. Residues 140–154 (AGEDGHPGKPGRPGE) show a composition bias toward basic and acidic residues. The residue at position 176 (Lys176) is a 5-hydroxylysine; alternate. An O-linked (Gal...) hydroxylysine; alternate glycan is attached at Lys176. 2 stretches are compositionally biased toward low complexity: residues 224 to 263 (IGAPGPAGARGSDGSAGPTGPAGPIGAAGPPGFPGAPGAK) and 299 to 320 (PGANGLPGAKGAAGLPGVAGAP). Positions 322–335 (LPGPRGIPGPPGPA) are enriched in pro residues. 2 positions are modified to 4-hydroxyproline: Pro440 and Pro443. Low complexity-rich tracts occupy residues 601-610 (PAGPIGSRGP) and 674-683 (RGLPGAIGAP). Over residues 684-699 (GPAGGAGDRGEGGPAG) the composition is skewed to gly residues. The segment covering 721-736 (PSGFAGPPGAAGQPGA) has biased composition (low complexity). A compositionally biased stretch (basic and acidic residues) spans 737 to 746 (KGERGPKGPK). 5 stretches are compositionally biased toward low complexity: residues 748 to 794 (ETGP…AGRV), 842 to 875 (AGEKGPSGEAGAAGPPGTPGPQGILGAPGILGLP), 898 to 931 (VSGPPGARGPSGPVGSPGPNGAPGEAGRDGNPGN), 955 to 965 (PSGALGAPGPH), and 986 to 995 (VGPAGAFGPR). Positions 1004–1015 (RGEKGEPGDKGH) are enriched in basic and acidic residues. Positions 1036 to 1049 (QHGDQGPPGNNGPA) are enriched in low complexity. Pro residues-rich tracts occupy residues 1051–1060 (PRGPPGPSGP) and 1088–1102 (AGPPGPPGPPGPPGP). Residues 1118-1363 (ADQPSLRPKD…GLHIGPVCFK (246 aa)) constitute a propeptide, C-terminal propeptide. The Fibrillar collagen NC1 domain maps to 1128 to 1363 (YEVDATLKTL…GLHIGPVCFK (236 aa)). 3 disulfides stabilise this stretch: Cys1158–Cys1190, Cys1198–Cys1361, and Cys1269–Cys1314. Residues Asp1176, Asn1178, Gln1179, Cys1181, and Asp1184 each contribute to the Ca(2+) site. Asn1264 is a glycosylation site (N-linked (GlcNAc...) asparagine).

It belongs to the fibrillar collagen family. Trimers of one alpha 2(I) and two alpha 1(I) chains. In terms of processing, prolines at the third position of the tripeptide repeating unit (G-X-Y) are hydroxylated in some or all of the chains. The N-terminus of the mature protein is blocked. As to expression, forms the fibrils of tendon, ligaments and bones. In bones the fibrils are mineralized with calcium hydroxyapatite.

It is found in the secreted. It localises to the extracellular space. The protein localises to the extracellular matrix. Type I collagen is a member of group I collagen (fibrillar forming collagen). The chain is Collagen alpha-2(I) chain (COL1A2) from Gallus gallus (Chicken).